Consider the following 393-residue polypeptide: CCA-adding enzyme (393 aa).

ATP contacts are provided by Gly-27 and Arg-30. The CTP site is built by Gly-27 and Arg-30. The Mg(2+) site is built by Asp-40 and Asp-42. ATP contacts are provided by Arg-111, Asp-154, Arg-157, Arg-160, and Arg-163. The CTP site is built by Arg-111, Asp-154, Arg-157, Arg-160, and Arg-163.

This sequence belongs to the tRNA nucleotidyltransferase/poly(A) polymerase family. Bacterial CCA-adding enzyme type 3 subfamily. In terms of assembly, homodimer. It depends on Mg(2+) as a cofactor.

It carries out the reaction a tRNA precursor + 2 CTP + ATP = a tRNA with a 3' CCA end + 3 diphosphate. The enzyme catalyses a tRNA with a 3' CCA end + 2 CTP + ATP = a tRNA with a 3' CCACCA end + 3 diphosphate. Catalyzes the addition and repair of the essential 3'-terminal CCA sequence in tRNAs without using a nucleic acid template. Adds these three nucleotides in the order of C, C, and A to the tRNA nucleotide-73, using CTP and ATP as substrates and producing inorganic pyrophosphate. tRNA 3'-terminal CCA addition is required both for tRNA processing and repair. Also involved in tRNA surveillance by mediating tandem CCA addition to generate a CCACCA at the 3' terminus of unstable tRNAs. While stable tRNAs receive only 3'-terminal CCA, unstable tRNAs are marked with CCACCA and rapidly degraded. This chain is CCA-adding enzyme, found in Listeria monocytogenes serotype 4a (strain HCC23).